The primary structure comprises 271 residues: Formamidopyrimidine-DNA glycosylase (271 aa).

The active-site Schiff-base intermediate with DNA is the Pro-2. Glu-3 functions as the Proton donor in the catalytic mechanism. Lys-56 acts as the Proton donor; for beta-elimination activity in catalysis. His-89, Arg-107, and Lys-151 together coordinate DNA. The FPG-type zinc-finger motif lies at 236-270; sequence NVYGRAGLPCRQCGTPVRLLRQGQRSTYFCPHCQR. Arg-260 (proton donor; for delta-elimination activity) is an active-site residue.

Belongs to the FPG family. As to quaternary structure, monomer. Zn(2+) is required as a cofactor.

The catalysed reaction is Hydrolysis of DNA containing ring-opened 7-methylguanine residues, releasing 2,6-diamino-4-hydroxy-5-(N-methyl)formamidopyrimidine.. It catalyses the reaction 2'-deoxyribonucleotide-(2'-deoxyribose 5'-phosphate)-2'-deoxyribonucleotide-DNA = a 3'-end 2'-deoxyribonucleotide-(2,3-dehydro-2,3-deoxyribose 5'-phosphate)-DNA + a 5'-end 5'-phospho-2'-deoxyribonucleoside-DNA + H(+). Its function is as follows. Involved in base excision repair of DNA damaged by oxidation or by mutagenic agents. Acts as a DNA glycosylase that recognizes and removes damaged bases. Has a preference for oxidized purines, such as 7,8-dihydro-8-oxoguanine (8-oxoG). Has AP (apurinic/apyrimidinic) lyase activity and introduces nicks in the DNA strand. Cleaves the DNA backbone by beta-delta elimination to generate a single-strand break at the site of the removed base with both 3'- and 5'-phosphates. The sequence is that of Formamidopyrimidine-DNA glycosylase from Acidovorax sp. (strain JS42).